A 400-amino-acid chain; its full sequence is Lysophospholipid transporter LplT (400 aa).

The next 12 membrane-spanning stretches (helical) occupy residues 19-39, 53-73, 91-111, 139-159, 164-184, 195-213, 227-247, 257-277, 281-301, 304-324, 352-372, and 373-393; these read VIVA…ATLA, VLQM…GQIA, AGAA…LVGI, MMEA…GVLA, IAAL…NLFI, SWRL…VVLW, LFWG…PVAL, YLNA…AKLV, TVSR…IFSL, ALLP…FFVV, NSAM…GVPA, and VAIG…LWIW.

This sequence belongs to the major facilitator superfamily. LplT (TC 2.A.1.42) family.

Its subcellular location is the cell inner membrane. In terms of biological role, catalyzes the facilitated diffusion of 2-acyl-glycero-3-phosphoethanolamine (2-acyl-GPE) into the cell. In Salmonella paratyphi B (strain ATCC BAA-1250 / SPB7), this protein is Lysophospholipid transporter LplT.